The sequence spans 100 residues: Large ribosomal subunit protein uL23 (100 aa).

Belongs to the universal ribosomal protein uL23 family. As to quaternary structure, part of the 50S ribosomal subunit. Contacts protein L29, and trigger factor when it is bound to the ribosome.

Its function is as follows. One of the early assembly proteins it binds 23S rRNA. One of the proteins that surrounds the polypeptide exit tunnel on the outside of the ribosome. Forms the main docking site for trigger factor binding to the ribosome. In Bradyrhizobium diazoefficiens (strain JCM 10833 / BCRC 13528 / IAM 13628 / NBRC 14792 / USDA 110), this protein is Large ribosomal subunit protein uL23.